The chain runs to 349 residues: uncharacterized protein (349 aa).

The first 26 residues, Met1 to Ala26, serve as a signal peptide directing secretion. 2 disordered regions span residues Gly30–Ala113 and Tyr322–Pro349. Residues His39 to Gly52 are compositionally biased toward polar residues. Over residues Asn90–Glu101 the composition is skewed to pro residues.

Binds to numerous extracellular matrix proteins.

The protein resides in the secreted. It is found in the extracellular space. The protein localises to the extracellular matrix. This is an uncharacterized protein from Mus musculus (Mouse).